Reading from the N-terminus, the 525-residue chain is GMP synthase [glutamine-hydrolyzing] (525 aa).

A Glutamine amidotransferase type-1 domain is found at 12–203; the sequence is TVLVVDFGAQ…LYRGAGLTPS (192 aa). Residue C89 is the Nucleophile of the active site. Catalysis depends on residues H177 and E179. In terms of domain architecture, GMPS ATP-PPase spans 204-399; that stretch reads WTTGNVIDEQ…LGLPDEIVQR (196 aa). ATP is bound at residue 231–237; sequence SGGVDSA.

Homodimer.

It catalyses the reaction XMP + L-glutamine + ATP + H2O = GMP + L-glutamate + AMP + diphosphate + 2 H(+). It functions in the pathway purine metabolism; GMP biosynthesis; GMP from XMP (L-Gln route): step 1/1. Its function is as follows. Catalyzes the synthesis of GMP from XMP. The polypeptide is GMP synthase [glutamine-hydrolyzing] (Streptomyces avermitilis (strain ATCC 31267 / DSM 46492 / JCM 5070 / NBRC 14893 / NCIMB 12804 / NRRL 8165 / MA-4680)).